A 379-amino-acid polypeptide reads, in one-letter code: Sporozoite surface protein P36 (379 aa).

The N-terminal stretch at 1–33 is a signal peptide; it reads MAYNIWEEYIMANFHNVYPVVTNLFLFIALSYS. 6-Cys domains are found at residues 69-206 and 215-379; these read FVFF…VKAN and FIKG…TVES. 3 disulfide bridges follow: Cys-91-Cys-101, Cys-115-Cys-186, and Cys-129-Cys-184. Residues Asn-98 and Asn-118 are each glycosylated (N-linked (GlcNAc...) asparagine). Asn-206 carries N-linked (GlcNAc...) asparagine glycosylation. 3 disulfide bridges follow: Cys-219–Cys-243, Cys-257–Cys-360, and Cys-295–Cys-358. Asn-298 and Asn-374 each carry an N-linked (GlcNAc...) asparagine glycan.

The protein localises to the cell surface. The protein resides in the cell membrane. Involved in sporozoite infection of hepatocytes and replication therein. The chain is Sporozoite surface protein P36 (PF36) from Plasmodium falciparum (isolate 3D7).